We begin with the raw amino-acid sequence, 257 residues long: UPF0246 protein CV_1250 (257 aa).

It belongs to the UPF0246 family.

The chain is UPF0246 protein CV_1250 from Chromobacterium violaceum (strain ATCC 12472 / DSM 30191 / JCM 1249 / CCUG 213 / NBRC 12614 / NCIMB 9131 / NCTC 9757 / MK).